An 88-amino-acid polypeptide reads, in one-letter code: Conotoxin Ca8.3 (88 aa).

The signal sequence occupies residues 1–21 (MMLKMGAMFVLLLLFILPSSQ). A propeptide spanning residues 22 to 46 (QEGDVQARKTHLKSGFYGTLAMSTR) is cleaved from the precursor.

Belongs to the conotoxin S superfamily. Contains 5 disulfide bonds. Expressed by the venom duct.

The protein resides in the secreted. The chain is Conotoxin Ca8.3 from Conus caracteristicus (Characteristic cone).